We begin with the raw amino-acid sequence, 224 residues long: Synaptonemal complex protein 3 (224 aa).

2 coiled-coil regions span residues 63-97 (RVKC…WEER) and 137-171 (HDSM…QSST).

In terms of assembly, interacts with gras-1. Interacts with brc-1 and brd-1.

Its subcellular location is the chromosome. Its function is as follows. Plays a role in early meiotic events; during prophase I contributes to synaptonemal complex (SC) assembly, synapsis and chiasmata formation and stabilization of homologous chromosomes pairing. Required for restricting SC assembly to bridge paired chromosome axes. Required for the timely progression of meiotic crossover recombination. Required for the synapsis checkpoint. The protein is Synaptonemal complex protein 3 of Caenorhabditis elegans.